Reading from the N-terminus, the 223-residue chain is Deoxyribose-phosphate aldolase (223 aa).

Aspartate 91 (proton donor/acceptor) is an active-site residue. Lysine 153 serves as the catalytic Schiff-base intermediate with acetaldehyde. The active-site Proton donor/acceptor is lysine 182.

This sequence belongs to the DeoC/FbaB aldolase family. DeoC type 1 subfamily.

Its subcellular location is the cytoplasm. It catalyses the reaction 2-deoxy-D-ribose 5-phosphate = D-glyceraldehyde 3-phosphate + acetaldehyde. The protein operates within carbohydrate degradation; 2-deoxy-D-ribose 1-phosphate degradation; D-glyceraldehyde 3-phosphate and acetaldehyde from 2-deoxy-alpha-D-ribose 1-phosphate: step 2/2. Functionally, catalyzes a reversible aldol reaction between acetaldehyde and D-glyceraldehyde 3-phosphate to generate 2-deoxy-D-ribose 5-phosphate. This is Deoxyribose-phosphate aldolase from Streptococcus pyogenes serotype M2 (strain MGAS10270).